A 359-amino-acid polypeptide reads, in one-letter code: Histidinol-phosphate aminotransferase (359 aa).

Position 217 is an N6-(pyridoxal phosphate)lysine (K217).

Belongs to the class-II pyridoxal-phosphate-dependent aminotransferase family. Histidinol-phosphate aminotransferase subfamily. In terms of assembly, homodimer. Requires pyridoxal 5'-phosphate as cofactor.

It carries out the reaction L-histidinol phosphate + 2-oxoglutarate = 3-(imidazol-4-yl)-2-oxopropyl phosphate + L-glutamate. It functions in the pathway amino-acid biosynthesis; L-histidine biosynthesis; L-histidine from 5-phospho-alpha-D-ribose 1-diphosphate: step 7/9. This Salmonella heidelberg (strain SL476) protein is Histidinol-phosphate aminotransferase.